The following is a 144-amino-acid chain: Large ribosomal subunit protein eL27 (144 aa).

The KOW domain occupies 6 to 43 (IKPGRLVILLNGKYAGRKAVVIKTFDDATASKSRPYGH).

The protein belongs to the eukaryotic ribosomal protein eL27 family.

This Dictyostelium discoideum (Social amoeba) protein is Large ribosomal subunit protein eL27 (rpl27).